Reading from the N-terminus, the 90-residue chain is Small ribosomal subunit protein uS19 (90 aa).

It belongs to the universal ribosomal protein uS19 family.

In terms of biological role, protein S19 forms a complex with S13 that binds strongly to the 16S ribosomal RNA. In Mesomycoplasma hyopneumoniae (strain 232) (Mycoplasma hyopneumoniae), this protein is Small ribosomal subunit protein uS19.